The following is a 345-amino-acid chain: Opioid-binding protein/cell adhesion molecule (345 aa).

Positions 1–27 (MGVCGYLFLPWKCLVVVSLRLLFLVPT) are cleaved as a signal peptide. Ig-like C2-type domains lie at 39–126 (PKAM…PKTS), 136–219 (PQIM…VKIT), and 223–310 (PPYI…ASIT). N-linked (GlcNAc...) asparagine glycosylation is found at Asn-44, Asn-70, and Asn-140. The cysteines at positions 57 and 115 are disulfide-linked. Disulfide bonds link Cys-157/Cys-202 and Cys-244/Cys-296. Asn-285, Asn-293, and Asn-306 each carry an N-linked (GlcNAc...) asparagine glycan. Asn-322 is lipidated: GPI-anchor amidated asparagine. Positions 323 to 345 (SASRALACLWLSGTFFAHFFIKF) are cleaved as a propeptide — removed in mature form.

Belongs to the immunoglobulin superfamily. IgLON family.

The protein localises to the cell membrane. Binds opioids in the presence of acidic lipids; probably involved in cell contact. The protein is Opioid-binding protein/cell adhesion molecule (Opcml) of Rattus norvegicus (Rat).